We begin with the raw amino-acid sequence, 162 residues long: Caveolin-2 (162 aa).

Over 1-86 (MGLETEKADV…FEISKYVIYK (86 aa)) the chain is Cytoplasmic. Y19 carries the phosphotyrosine; by SRC modification. S20 and S23 each carry phosphoserine. Phosphotyrosine; by SRC is present on Y27. Phosphoserine is present on S36. Residues 87–107 (FLTVFLAIPLAFAAGIIFATL) constitute an intramembrane region (helical). Over 108–162 (SCLHIWIIMPFVKTCLMVLPSVQTIWRSVTDAVIAPLCTSVGRVFSSVSLQLSRD) the chain is Cytoplasmic.

The protein belongs to the caveolin family. In terms of assembly, monomer or homodimer. Interacts with CAV1; the interaction forms a stable heterooligomeric complex that is required for targeting to lipid rafts and for caveolae formation. Tyrosine phosphorylated forms do not form heterooligomers with the Tyr-19-phosphorylated form existing as a monomer or dimer, and the Tyr-27-form as a monomer only. Interacts (tyrosine phosphorylated form) with the SH2 domain-containing proteins, RASA1, NCK1 and SRC. Interacts (tyrosine phosphorylated form) with INSR, the interaction (Tyr-27-phosphorylated form) is increased on insulin stimulation. Interacts (Tyr-19 phosphorylated form) with MAPK1 (phosphorylated form); the interaction, promoted by insulin, leads to nuclear location and MAPK1 activation. Interacts with STAT3; the interaction is increased on insulin-induced tyrosine phosphorylation leading to STAT activation. In terms of processing, phosphorylated on serine and tyrosine residues. CAV1 promotes phosphorylation on Ser-23 which then targets the complex to the plasma membrane, lipid rafts and caveolae. Phosphorylation on Ser-36 appears to modulate mitosis in endothelial cells. Phosphorylation on both Tyr-19 and Tyr-27 is required for insulin-induced 'Ser-727' phosphorylation of STAT3 and its activation. Phosphorylation on Tyr-19 is required for insulin-induced phosphorylation of MAPK1 and DNA binding of STAT3. Tyrosine phosphorylation is induced by both EGF and insulin (By. similarity).

The protein resides in the nucleus. Its subcellular location is the cytoplasm. It is found in the golgi apparatus membrane. The protein localises to the cell membrane. It localises to the membrane. The protein resides in the caveola. In terms of biological role, may act as a scaffolding protein within caveolar membranes. Interacts directly with G-protein alpha subunits and can functionally regulate their activity. Acts as an accessory protein in conjunction with CAV1 in targeting to lipid rafts and driving caveolae formation. The Ser-36 phosphorylated form has a role in modulating mitosis in endothelial cells. Positive regulator of cellular mitogenesis of the MAPK signaling pathway. Required for the insulin-stimulated nuclear translocation and activation of MAPK1 and STAT3, and the subsequent regulation of cell cycle progression. This chain is Caveolin-2 (CAV2), found in Carollia perspicillata (Seba's short-tailed bat).